Consider the following 485-residue polypeptide: Acetyl-coenzyme A carboxylase carboxyl transferase subunit beta, chloroplastic (485 aa).

In terms of domain architecture, CoA carboxyltransferase N-terminal spans 218–485 (LWIQCDNCYA…FFPLNKNEIK (268 aa)). Zn(2+) is bound by residues C222, C225, C241, and C244. The C4-type zinc-finger motif lies at 222-244 (CDNCYALIYKKALKFKMNVCEQC).

This sequence belongs to the AccD/PCCB family. As to quaternary structure, acetyl-CoA carboxylase is a heterohexamer composed of biotin carboxyl carrier protein, biotin carboxylase and 2 subunits each of ACCase subunit alpha and ACCase plastid-coded subunit beta (accD). Requires Zn(2+) as cofactor.

It localises to the plastid. The protein localises to the chloroplast stroma. The catalysed reaction is N(6)-carboxybiotinyl-L-lysyl-[protein] + acetyl-CoA = N(6)-biotinyl-L-lysyl-[protein] + malonyl-CoA. The protein operates within lipid metabolism; malonyl-CoA biosynthesis; malonyl-CoA from acetyl-CoA: step 1/1. In terms of biological role, component of the acetyl coenzyme A carboxylase (ACC) complex. Biotin carboxylase (BC) catalyzes the carboxylation of biotin on its carrier protein (BCCP) and then the CO(2) group is transferred by the transcarboxylase to acetyl-CoA to form malonyl-CoA. The protein is Acetyl-coenzyme A carboxylase carboxyl transferase subunit beta, chloroplastic of Aethionema cordifolium (Lebanon stonecress).